The primary structure comprises 267 residues: Hydroxyethylthiazole kinase (267 aa).

Met46 serves as a coordination point for substrate. The ATP site is built by Arg122 and Thr168. Gly195 lines the substrate pocket.

The protein belongs to the Thz kinase family. The cofactor is Mg(2+).

The catalysed reaction is 5-(2-hydroxyethyl)-4-methylthiazole + ATP = 4-methyl-5-(2-phosphooxyethyl)-thiazole + ADP + H(+). The protein operates within cofactor biosynthesis; thiamine diphosphate biosynthesis; 4-methyl-5-(2-phosphoethyl)-thiazole from 5-(2-hydroxyethyl)-4-methylthiazole: step 1/1. In terms of biological role, catalyzes the phosphorylation of the hydroxyl group of 4-methyl-5-beta-hydroxyethylthiazole (THZ). This chain is Hydroxyethylthiazole kinase, found in Moorella thermoacetica (strain ATCC 39073 / JCM 9320).